A 402-amino-acid chain; its full sequence is Endoplasmic reticulum junction formation protein lunapark-B (402 aa).

Residues 1 to 45 (MGAIISRWKTKPSTVELLESLDKDIKDLEEFRAKNQRLLKLWVGR) lie on the Cytoplasmic side of the membrane. The helical transmembrane segment at 46 to 66 (LLFYSSALYLLTCLCVYYLYF) threads the bilayer. At 67–77 (PQQWGARLITA) the chain is on the lumenal side. Residues 78 to 98 (LPLLAFPALVLLLRKMLIFLF) traverse the membrane as a helical segment. The Cytoplasmic segment spans residues 99–402 (SKRTERNNDK…EEQKKEDESN (304 aa)). A coiled-coil region spans residues 100–128 (KRTERNNDKLEDLKTQKRKILEEVMETET). The segment at 142–240 (ESKKKAEAEA…PGPGSGMRPP (99 aa)) is disordered. Over residues 205–222 (SASTPAGASQAETPQQMM) the composition is skewed to polar residues. The segment at 276-301 (CQQCFSHNGMALKEEFEFVAFRCAYC) adopts a C4-type; plays a role in ER morphology zinc-finger fold. The segment at 311-402 (RPQAPRLPEF…EEQKKEDESN (92 aa)) is disordered. Residues 321-330 (SFERRLRSES) show a composition bias toward basic and acidic residues. The segment covering 341–352 (TPEDSDAPEDDM) has biased composition (acidic residues). The segment covering 385–402 (PHAEAEALEEQKKEDESN) has biased composition (basic and acidic residues).

Belongs to the lunapark family. As to quaternary structure, homodimer; homodimerization requires the C4-type zinc finger motif and decreases during mitosis in a phosphorylation-dependent manner. Post-translationally, phosphorylated. Phosphorylation occurs during interphase. Phosphorylation also occurs during mitosis; these phosphorylations reduce both its homodimerization and the ER three-way tubular junction formation.

It localises to the endoplasmic reticulum membrane. In terms of biological role, endoplasmic reticulum (ER)-shaping membrane protein that plays a role in determining ER morphology. Involved in the stabilization of nascent three-way ER tubular junctions within the ER network. May also play a role as a curvature-stabilizing protein within three-way ER tubular junction network. The polypeptide is Endoplasmic reticulum junction formation protein lunapark-B (lnpkb) (Danio rerio (Zebrafish)).